The chain runs to 357 residues: Dehydrogenase FUB6 (357 aa).

The protein belongs to the zinc-containing alcohol dehydrogenase family. Quinone oxidoreductase subfamily.

Its pathway is mycotoxin biosynthesis. In terms of biological role, dehydrogenase; part of the gene cluster that mediates the biosynthesis of fusaric acid, a mycotoxin with low to moderate toxicity to animals and humans, but with high phytotoxic properties. L-aspartate is suggested as fusaric acid amino acid precursor that is activated and further processed to O-acetyl-L-homoserine by cluster enzymes aspartate kinase FUB3 and homoserine O-acetyltransferase FUB5, as well as enzymes of the primary metabolism. The polyketide synthase (PKS) FUB1 generates the triketide trans-2-hexenal which is presumptively released by the hydrolase FUB4 and linked to the NRPS-bound amino acid precursor by NAD(P)-dependent dehydrogenase FUB6. FUB1, FUB4, and the non-canonical NRPS Fub8 may form an enzyme complex. Further processing of the NRPS-bound intermediate might be carried out by FUB6 and the O-acetylhomoserine FUB7, enabling a spontaneous electrocyclization to close the carbon backbone of fusaric acid. Dihydrofusaric acid is likely to be released via reduction by the thioester reductase (TR) domain of FUB8 whereupon the final oxidation to fusaric acid may (also) be performed by the FMN-dependent dehydrogenase FUB9. This is Dehydrogenase FUB6 from Gibberella moniliformis (strain M3125 / FGSC 7600) (Maize ear and stalk rot fungus).